The sequence spans 249 residues: Elsinochromes biosynthesis cluster protein HP3 (249 aa).

N-linked (GlcNAc...) asparagine glycosylation occurs at Asn106. Residues 138-158 (VVFAFMLSAWLVWLITVYAFA) form a helical membrane-spanning segment.

It is found in the membrane. Its function is as follows. Part of the gene cluster that mediates the biosynthesis of elsinochromes, pigments consisting of at least four interconvertible tautomers (A, B, C and D) that have a core phenolic quinone to which various side chains are attached and which play an important role in fungal pathogenesis. The non-reducing polyketide synthase PKS1 was proposed to iteratively catalyze decarboxylation between acetyl-CoA and malonyl-CoA subunits for polyketide chain elongation. The released polyketide undergoes cyclization to form an aromatic ring, and proceeds via serial modification steps to produce the heptaketide back- bone of elsinochrome. As elsinochrome has a symmetrical structure, two identical heptaketides are fused to form a core 1,2-dihydrobenzo-perylene ring structure, which can then be successively modified to produce the various derivatives of elsinochrome. Some of these reactions may be cooperatively carried out, at least in part, by the products of RDT1, OXR1 and PKS1. PRF1, embedded within the elsinochrome cluster possibly functions to stabilize some of the biosynthetic enzymes required for elsinochrome production. As prefoldin is a hexamer containing 2 a and 4 b subunits, additional prefoldin subunits, whose coding genes may not immediately link to the elsinochrome biosynthetic gene cluster, are required to fulfill the chaperone function. In addition, no methyltransferase-coding gene exists within the biosynthetic gene cluster, even though elsinochrome has four methyl groups at positions C3, C7, C8 and C12. Apparently, the identified gene cluster does not contain the entire entourage of genes responsible for elsinochrome biosynthesis. Once elsinochrome is synthesized, it must be exported outside the fungal cells, which is probably accomplished by the ECT1 transporter, to avoid toxicity. The polypeptide is Elsinochromes biosynthesis cluster protein HP3 (Elsinoe fawcettii (Citrus scab fungus)).